Here is a 283-residue protein sequence, read N- to C-terminus: Elongation factor Ts (283 aa).

The tract at residues 82–85 (TDFV) is involved in Mg(2+) ion dislocation from EF-Tu.

Belongs to the EF-Ts family.

The protein resides in the cytoplasm. Associates with the EF-Tu.GDP complex and induces the exchange of GDP to GTP. It remains bound to the aminoacyl-tRNA.EF-Tu.GTP complex up to the GTP hydrolysis stage on the ribosome. The protein is Elongation factor Ts of Photorhabdus laumondii subsp. laumondii (strain DSM 15139 / CIP 105565 / TT01) (Photorhabdus luminescens subsp. laumondii).